The following is an 84-amino-acid chain: Cell division topological specificity factor (84 aa).

It belongs to the MinE family.

Its function is as follows. Prevents the cell division inhibition by proteins MinC and MinD at internal division sites while permitting inhibition at polar sites. This ensures cell division at the proper site by restricting the formation of a division septum at the midpoint of the long axis of the cell. The chain is Cell division topological specificity factor from Chromohalobacter salexigens (strain ATCC BAA-138 / DSM 3043 / CIP 106854 / NCIMB 13768 / 1H11).